A 512-amino-acid polypeptide reads, in one-letter code: Colistin resistance protein EmrB (512 aa).

The next 14 helical transmembrane spans lie at Trp-17 to Val-37, Val-55 to Ile-75, Val-84 to Trp-104, Ile-115 to Phe-135, Leu-144 to Trp-164, Phe-169 to Ile-189, Ser-205 to Leu-225, Leu-234 to Phe-254, Ile-280 to Leu-300, Val-314 to Pro-334, Thr-341 to Ile-361, Gly-376 to Leu-396, Ile-412 to His-432, and Phe-486 to Phe-506.

It belongs to the major facilitator superfamily. EmrB family.

The protein localises to the cell inner membrane. Functionally, probably part of an efflux pump system that contributes to adaptation to osmotic stress and resistance to colistin. This chain is Colistin resistance protein EmrB, found in Acinetobacter baumannii (strain ATCC 17978 / DSM 105126 / CIP 53.77 / LMG 1025 / NCDC KC755 / 5377).